The primary structure comprises 75 residues: Protein SlyX homolog (75 aa).

The disordered stretch occupies residues 56-75; the sequence is KNMDSSNMEDPANEPPPPHY.

Belongs to the SlyX family.

This chain is Protein SlyX homolog, found in Vibrio parahaemolyticus serotype O3:K6 (strain RIMD 2210633).